A 679-amino-acid chain; its full sequence is Dihydroxyacetone phosphate acyltransferase (679 aa).

S11 carries the post-translational modification Phosphoserine. Residues 161-166 (HRSYID) carry the HXXXXD motif motif. K642 carries the post-translational modification N6-acetyllysine.

Belongs to the GPAT/DAPAT family. In terms of assembly, part of a heterotrimeric complex composed of GNPAT, AGPS and a modified form of GNPAT.

The protein localises to the peroxisome membrane. The catalysed reaction is dihydroxyacetone phosphate + an acyl-CoA = a 1-acylglycerone 3-phosphate + CoA. The enzyme catalyses dihydroxyacetone phosphate + hexadecanoyl-CoA = 1-hexadecanoylglycerone 3-phosphate + CoA. Its pathway is membrane lipid metabolism; glycerophospholipid metabolism. Functionally, dihydroxyacetonephosphate acyltransferase catalyzing the first step in the biosynthesis of plasmalogens, a subset of phospholipids that differ from other glycerolipids by having an alkyl chain attached through a vinyl ether linkage at the sn-1 position of the glycerol backbone, and which unique physical properties have an impact on various aspects of cell signaling and membrane biology. This Oryctolagus cuniculus (Rabbit) protein is Dihydroxyacetone phosphate acyltransferase.